The following is a 611-amino-acid chain: Leukotriene A-4 hydrolase (611 aa).

K73 carries the post-translational modification N6-acetyllysine. A peptide-binding positions include 135–137 (QCQ) and 267–272 (PYGGME). H296 contacts Zn(2+). The active-site Proton acceptor is the E297. Residues H300 and E319 each contribute to the Zn(2+) site. The residue at position 337 (K337) is an N6-acetyllysine. Residue Y384 is the Proton donor of the active site. K414 is subject to N6-acetyllysine. S416 carries the post-translational modification Phosphoserine. 564–566 (RMK) is a binding site for a peptide. K573 bears the N6-acetyllysine mark.

The protein belongs to the peptidase M1 family. Monomer. Zn(2+) serves as cofactor. Post-translationally, phosphorylation at Ser-416 inhibits leukotriene-A4 hydrolase activity. activity.

Its subcellular location is the cytoplasm. The catalysed reaction is leukotriene A4 + H2O = leukotriene B4. It catalyses the reaction (5S,6S)-epoxy-(18R)-hydroxy-(7E,9E,11Z,14Z,16E)-eicosapentaenoate + H2O = resolvin E1. It carries out the reaction (5S,6S)-epoxy-(18S)-hydroxy-(7E,9E,11Z,14Z,16E)-eicosapentaenoate + H2O = 18S-resolvin E1. The enzyme catalyses Release of the N-terminal residue from a tripeptide.. The protein operates within lipid metabolism; leukotriene B4 biosynthesis. With respect to regulation, inhibited by bestatin. The epoxide hydrolase activity is restrained by suicide inactivation that involves binding of LTA4 to Tyr-379. 4-(4-benzylphenyl)thiazol-2-amine (ARM1) selectively inhibits the epoxide hydrolase activity. Its function is as follows. Bifunctional zinc metalloenzyme that comprises both epoxide hydrolase (EH) and aminopeptidase activities. Acts as an epoxide hydrolase to catalyze the conversion of LTA4 to the pro-inflammatory mediator leukotriene B4 (LTB4). Also has aminopeptidase activity, with high affinity for N-terminal arginines of various synthetic tripeptides. In addition to its pro-inflammatory EH activity, may also counteract inflammation by its aminopeptidase activity, which inactivates by cleavage another neutrophil attractant, the tripeptide Pro-Gly-Pro (PGP), a bioactive fragment of collagen generated by the action of matrix metalloproteinase-9 (MMP9) and prolylendopeptidase (PREPL). Involved also in the biosynthesis of resolvin E1 and 18S-resolvin E1 from eicosapentaenoic acid, two lipid mediators that show potent anti-inflammatory and pro-resolving actions. The chain is Leukotriene A-4 hydrolase (LTA4H) from Bos taurus (Bovine).